The following is a 393-amino-acid chain: Protein FAM47E (393 aa).

Positions 326–354 form a coiled coil; sequence VSHKAQEENFKKELQEQEELLADLHGTVA.

The protein belongs to the FAM47 family. In terms of assembly, interacts with PRMT5; the interaction is direct. Interacts with WDR77.

The protein localises to the nucleus. It is found in the chromosome. The protein resides in the cytoplasm. Promotes histone methylation by localizing the arginine methyltransferase PRMT5 to chromatin. The sequence is that of Protein FAM47E (FAM47E) from Homo sapiens (Human).